A 427-amino-acid chain; its full sequence is Probable G-protein coupled receptor 150 (427 aa).

Over 1–3 the chain is Extracellular; the sequence is MED. The chain crosses the membrane as a helical span at residues 4-24; it reads PFSLAILNPASNLSVPTQPSW. Residues 25-50 lie on the Cytoplasmic side of the membrane; sequence SLNLTSEQGASVPGPHSPPRGPPSHR. A helical transmembrane segment spans residues 51–71; it reads IHLVFLGIILVAAVAGNTTVL. Residues 72 to 89 are Extracellular-facing; sequence CRLCGGSSGPWPGPKRRK. Residues 90-110 traverse the membrane as a helical segment; it reads MDFLLVQLAAADLYASGGTAL. Over 111–170 the chain is Cytoplasmic; that stretch reads SQLAWELLGDPRPALGDLACRLSHLLQASGRGASAHLVALIALERQLAVRIPQGPQLPAR. A helical membrane pass occupies residues 171-191; that stretch reads ALAALSWLLALLLALPPTFVV. The Extracellular segment spans residues 192–230; the sequence is RWDAPPSSTANAWPGKHCCRGIFAPLPRWHLQVYALYEA. Residues 231–251 traverse the membrane as a helical segment; it reads IVGFAAPVALLGFSCGHLLCV. Residues 252–286 are Cytoplasmic-facing; sequence WWQRGSQAPVARMPWSPSMARASLPSALPQAKVQS. A helical membrane pass occupies residues 287–307; the sequence is LKMSLALALLFVGCDLPYFAA. At 308–327 the chain is on the extracellular side; sequence RLAAAWSSKPAGDWERESLV. The chain crosses the membrane as a helical span at residues 328-348; it reads AAMRVLEVANSAINPLIYLFF. At 349–427 the chain is on the cytoplasmic side; it reads QAGDCRLWRR…PPPCSCESAF (79 aa). Residues 402-427 form a disordered region; that stretch reads EERNQGCLRPPPPRPRPPPCSCESAF. The span at 410–421 shows a compositional bias: pro residues; that stretch reads RPPPPRPRPPPC.

Belongs to the G-protein coupled receptor 1 family.

The protein resides in the cell membrane. Orphan receptor. In Mus musculus (Mouse), this protein is Probable G-protein coupled receptor 150 (Gpr150).